Consider the following 768-residue polypeptide: Vacuolar basic amino acid transporter 4 (768 aa).

The Cytoplasmic portion of the chain corresponds to 1–252; the sequence is MGKKDRQRKK…HDLTRRRIFS (252 aa). Positions 9–40 form a coiled coil; sequence KKLREFAKLKNRQRNLRKSVQTLKNEVQREAK. Residues 34–172 are disordered; that stretch reads EVQREAKVPR…ELPVSSSNSF (139 aa). Ser-62, Ser-99, and Ser-106 each carry phosphoserine. A compositionally biased stretch (basic and acidic residues) spans 110-121; the sequence is KPADKANEDDLK. Positions 132–159 are enriched in polar residues; sequence SALQSSITDFSDRSVSPLQSITSCNTPM. Residues Ser-160 and Ser-192 each carry the phosphoserine modification. A helical transmembrane segment spans residues 253–273; that stretch reads SCMCTYLFFIAMDSSIILVIA. Residues 274-282 lie on the Vacuolar side of the membrane; sequence SKIASEFHE. The chain crosses the membrane as a helical span at residues 283–305; the sequence is LWRLSLVISAYLLSNAIGQLVFL. Residues 306–311 lie on the Cytoplasmic side of the membrane; sequence KLSLIS. A helical transmembrane segment spans residues 312–331; sequence SVKLLLCIAQFSFILGGYLS. The Vacuolar segment spans residues 332–334; that stretch reads WSS. The helical transmembrane segment at 335 to 357 threads the bilayer; it reads AHFWTFIFARCVTGFGGGSLIAL. Residues 358–375 are Cytoplasmic-facing; that stretch reads KSTIMNRFSQKNDSRYSL. Residues 376 to 396 form a helical membrane-spanning segment; sequence SASMITFAMGVVIGPFMMNLF. Residues 397–406 lie on the Vacuolar side of the membrane; that stretch reads DSSHGSGWRN. The helical transmembrane segment at 407-427 threads the bilayer; it reads AFLIPVPFCLVNASIMLADMY. The Cytoplasmic segment spans residues 428–447; the sequence is SVKSTLYGRPTPTLWKRFKN. The chain crosses the membrane as a helical span at residues 448-468; that stretch reads TLLSPDLYEILTLTLFLLCFV. The Vacuolar portion of the chain corresponds to 469–481; sequence QVTSLDLTGLKNN. Asn-480 carries N-linked (GlcNAc...) asparagine glycosylation. Residues 482 to 502 traverse the membrane as a helical segment; the sequence is TMIQALLFSVIIVCGILFFLI. The Cytoplasmic segment spans residues 503 to 522; that stretch reads ETSDTYMNSVISMSLQGDKR. The helical transmembrane segment at 523–543 threads the bilayer; sequence LIWTMIGISFCFAALMCIIPF. Topologically, residues 544-562 are vacuolar; it reads GTTYFIIVLNLSTLQLAER. The N-linked (GlcNAc...) asparagine glycan is linked to Asn-553. Residues 563-583 traverse the membrane as a helical segment; the sequence is LSPFFFSIVLGYFSVSYFWKS. The Cytoplasmic portion of the chain corresponds to 584–587; it reads KGQN. A helical membrane pass occupies residues 588–608; the sequence is FLLKFVLSGATLLLYVALMGV. Over 609–617 the chain is Vacuolar; the sequence is SLNLPVWKQ. Residues 618-638 form a helical membrane-spanning segment; it reads YICLSLPFLGSSMILTLLSNL. Residues 639–653 lie on the Cytoplasmic side of the membrane; it reads YHEYHEQRKSPISGS. A helical membrane pass occupies residues 654-674; it reads IVYCFGAVGGTVGISLGGYVF. Topologically, residues 675–734 are vacuolar; the sequence is HKTLIKLMHEKVMPFSKQGYLKKDLLKIIKHATESSDWVHESAPKFVFQTLIECYLQACR. Residues 735 to 755 form a helical membrane-spanning segment; the sequence is NVFKLSTLFFTITVVAIFIFN. Over 756–768 the chain is Cytoplasmic; the sequence is RIHCRSQNCLSLS.

This sequence belongs to the major facilitator superfamily.

The protein resides in the vacuole membrane. In terms of biological role, transporter required for vacuolar uptake of basic amino acids. The chain is Vacuolar basic amino acid transporter 4 (VBA4) from Saccharomyces cerevisiae (strain ATCC 204508 / S288c) (Baker's yeast).